Here is a 1036-residue protein sequence, read N- to C-terminus: Nitrogen catabolic enzyme regulatory protein (1036 aa).

Over residues 1 to 17 (MAASTTTPTATTRPFFT) the composition is skewed to low complexity. Disordered regions lie at residues 1-126 (MAAS…HTQS), 207-240 (TDRT…SQGS), 256-298 (TPAG…QSQH), 318-351 (GYLP…HVSA), 590-743 (SSQG…PTTC), 792-976 (RGSG…PTTQ), and 1000-1028 (GMPN…TGAE). Positions 23-34 (TEHDFRFPRRPG) are enriched in basic and acidic residues. A compositionally biased stretch (low complexity) spans 45–56 (AAMSSSSANNNH). 3 tandem repeats follow at residues 49-55 (SSSANNN), 87-92 (SSSNNN), and 105-110 (SSSNNN). The tract at residues 49-110 (SSSANNNHNQ…INHQSSSNNN (62 aa)) is 3 X approximate repeats. Residues 100–114 (NINHQSSSNNNISKN) are compositionally biased toward low complexity. Residues 652 to 661 (PRSQSQSFRQ) are compositionally biased toward polar residues. The segment covering 703-714 (SSGLSSVPASRP) has biased composition (low complexity). Positions 723–736 (QGSTTNLQGAAGNS) are enriched in polar residues. The GATA-type zinc-finger motif lies at 743-767 (CTNCFTQTTPLWRRNPDGQPLCNAC). The segment covering 802–827 (GTSTRSKKNASMSAAARKNSTLSITS) has biased composition (polar residues). 2 stretches are compositionally biased toward low complexity: residues 828–861 (NANN…ASGP) and 868–899 (AGST…SAPP). A compositionally biased stretch (polar residues) spans 927–961 (SAGSDQPVSAGAVSSSGMDVDSPANSTGSNETMPT). Residues 1000–1023 (GMPNGQAGQMMGASSSSGPGSGPS) show a composition bias toward low complexity.

Interacts with nmr.

The protein localises to the nucleus. Major nitrogen regulatory protein. During conditions of nitrogen limitation it turns on the expression of genes for enzymes which are required for the use of a variety of secondary nitrogen sources, including nitrates, purines, amino acids, and proteins. In Neurospora crassa (strain ATCC 24698 / 74-OR23-1A / CBS 708.71 / DSM 1257 / FGSC 987), this protein is Nitrogen catabolic enzyme regulatory protein (nit-2).